The sequence spans 307 residues: Thiohydrolase apmlB (307 aa).

It belongs to the polyketide transferase af380 family.

In terms of biological role, thiohydrolase; part of the gene cluster that mediates the biosynthesis of phaeospelide A, a fungal polyene macrolide with a 34-membered macrolactone ring and an all-trans conjugated hexaene structure. The HR-PKS ApmlA uses acetyl-CoA and malonyl-CoA as its starter and extender units, respectively, and provides the large carbon framework in phaeospelide via 16 cycles of polyketide chain elongation, which is the largest number identified in fungal iterative PKSs thus far. During round 1, the KR domain reduces beta -ketone to an L-oriented hydroxy group, while during later rounds, it provides hydroxy groups in the D-configuration. The characteristic conjugated hexaene moiety is built during the later rounds (10-15), when the KR and DH domains are at work but ER is off. Phylogenetic analysis of the DH domain suggests that a polyene formation is programmed in the DH domain. Finally, the mature ACP-tethered carbon chain is transferred to the serine residue of the thiohydrolase apmlB, followed by intramolecular macrolactonization, generating phaeospelide A. When one elongation cycle during rounds 7-9 is skipped, phaeospelide B is biosynthesized instead. This Arthrinium phaeospermum (Gymnosporium phaeospermum) protein is Thiohydrolase apmlB.